The sequence spans 284 residues: Bifunctional protein FolD (284 aa).

NADP(+)-binding positions include 165 to 167, S190, and I231; that span reads GRS.

It belongs to the tetrahydrofolate dehydrogenase/cyclohydrolase family. As to quaternary structure, homodimer.

The enzyme catalyses (6R)-5,10-methylene-5,6,7,8-tetrahydrofolate + NADP(+) = (6R)-5,10-methenyltetrahydrofolate + NADPH. It catalyses the reaction (6R)-5,10-methenyltetrahydrofolate + H2O = (6R)-10-formyltetrahydrofolate + H(+). It functions in the pathway one-carbon metabolism; tetrahydrofolate interconversion. Functionally, catalyzes the oxidation of 5,10-methylenetetrahydrofolate to 5,10-methenyltetrahydrofolate and then the hydrolysis of 5,10-methenyltetrahydrofolate to 10-formyltetrahydrofolate. This is Bifunctional protein FolD from Lysinibacillus sphaericus (strain C3-41).